A 93-amino-acid polypeptide reads, in one-letter code: Small ribosomal subunit protein uS19 (93 aa).

A disordered region spans residues 72–93; it reads GEFSPTRTYRGHNKKDKKMQKK. Residues 80–93 show a composition bias toward basic residues; that stretch reads YRGHNKKDKKMQKK.

It belongs to the universal ribosomal protein uS19 family.

Protein S19 forms a complex with S13 that binds strongly to the 16S ribosomal RNA. The chain is Small ribosomal subunit protein uS19 from Aster yellows witches'-broom phytoplasma (strain AYWB).